Consider the following 393-residue polypeptide: tRNA-specific 2-thiouridylase MnmA (393 aa).

ATP is bound by residues alanine 19–serine 26 and leucine 45. The active-site Nucleophile is the cysteine 113. A disulfide bridge links cysteine 113 with cysteine 210. Glycine 137 contacts ATP. The interaction with tRNA stretch occupies residues arginine 160–glutamine 162. Cysteine 210 acts as the Cysteine persulfide intermediate in catalysis.

Belongs to the MnmA/TRMU family.

The protein resides in the cytoplasm. The catalysed reaction is S-sulfanyl-L-cysteinyl-[protein] + uridine(34) in tRNA + AH2 + ATP = 2-thiouridine(34) in tRNA + L-cysteinyl-[protein] + A + AMP + diphosphate + H(+). Catalyzes the 2-thiolation of uridine at the wobble position (U34) of tRNA, leading to the formation of s(2)U34. In Bradyrhizobium diazoefficiens (strain JCM 10833 / BCRC 13528 / IAM 13628 / NBRC 14792 / USDA 110), this protein is tRNA-specific 2-thiouridylase MnmA.